The following is a 655-amino-acid chain: Cyclomaltodextrin glucanotransferase (655 aa).

A signal peptide spans 1–30; that stretch reads MKRNRFFNTSAAIAISIALNTFFCSMQTIA. Residues aspartate 55, asparagine 60, asparagine 61, glycine 79, and aspartate 81 each contribute to the Ca(2+) site. 123-124 contributes to the substrate binding site; sequence YW. Asparagine 164 lines the Ca(2+) pocket. Substrate is bound by residues histidine 165 and 217-220; that span reads NLFN. Aspartate 223 lines the Ca(2+) pocket. Residue arginine 251 coordinates substrate. Catalysis depends on aspartate 253, which acts as the Nucleophile. Position 256–257 (256–257) interacts with substrate; that stretch reads KH. Ca(2+) is bound at residue histidine 257. Glutamate 287 (proton donor) is an active-site residue. Substrate-binding residues include histidine 362, aspartate 436, and arginine 440. The CBM20 domain occupies 554–655; that stretch reads AENPTVQSIN…NDTQTTNGSF (102 aa). The interval 630–655 is disordered; it reads TANVEWQSGANNQFNSNDTQTTNGSF.

Belongs to the glycosyl hydrolase 13 family. Monomer. The cofactor is Ca(2+).

The enzyme catalyses Cyclizes part of a (1-&gt;4)-alpha-D-glucan chain by formation of a (1-&gt;4)-alpha-D-glucosidic bond.. This Klebsiella oxytoca protein is Cyclomaltodextrin glucanotransferase (cgt).